A 269-amino-acid chain; its full sequence is Shikimate dehydrogenase (NADP(+)) (269 aa).

Shikimate-binding positions include 22–24 (TLS) and T68. The Proton acceptor role is filled by K72. Shikimate-binding residues include N93 and D104. NADP(+)-binding positions include 128 to 132 (GAGGA), 152 to 157 (NRTNLR), and F210. Position 212 (Y212) interacts with shikimate. G233 serves as a coordination point for NADP(+).

This sequence belongs to the shikimate dehydrogenase family. Homodimer.

The catalysed reaction is shikimate + NADP(+) = 3-dehydroshikimate + NADPH + H(+). The protein operates within metabolic intermediate biosynthesis; chorismate biosynthesis; chorismate from D-erythrose 4-phosphate and phosphoenolpyruvate: step 4/7. In terms of biological role, involved in the biosynthesis of the chorismate, which leads to the biosynthesis of aromatic amino acids. Catalyzes the reversible NADPH linked reduction of 3-dehydroshikimate (DHSA) to yield shikimate (SA). The polypeptide is Shikimate dehydrogenase (NADP(+)) (Saccharolobus islandicus (strain Y.N.15.51 / Yellowstone #2) (Sulfolobus islandicus)).